A 229-amino-acid chain; its full sequence is Choline-phosphate cytidylyltransferase (229 aa).

CDP-choline is bound by residues Leu-6, Ala-8, Gly-9, Tyr-80, Asn-82, Ser-85, and Ala-101. Residue Asp-102 participates in Mg(2+) binding. Tyr-185 is a CDP-choline binding site. Mg(2+) contacts are provided by Glu-211 and Asp-213.

This sequence belongs to the LicC/PntC cytidylyltransferase family. As to quaternary structure, monomer. Forms dimers in LicC-CDP-Cho-Mg(2+) crystals, but the monomer is probably the biologically functional unit. Requires Mg(2+) as cofactor.

It carries out the reaction phosphocholine + CTP + H(+) = CDP-choline + diphosphate. The protein operates within cell wall biogenesis; teichoic acid biosynthesis. Its pathway is cell wall biogenesis; lipoteichoic acid biosynthesis. Its activity is regulated as follows. Mg(2+) in slight excess of CTP gives maximal activity. Strongly inhibited by Ca(2+) and several other metal ions, such as Cd(2+), Co(2+), Cu(2+), Mn(2+), Ni(2+), Zn(2+) and Fe(2+). Also inhibited by Mg(2+) at high concentrations. CDP-Cho is a competitive inhibitor with respect to CTP, whereas diphosphate is a mixed-type inhibitor with respect to CTP. In terms of biological role, cytidylyltransferase involved in the biosynthesis of the phosphocholine containing cell wall constituents, teichoic acid and lipoteichoic acid, which are essential for cell separation and pathogenesis. Catalyzes the activation of phosphocholine (P-Cho) to CDP-choline (CDP-Cho). Can also use phosphoethanolamine and 2-aminoethylphosphonate, with much lower efficiency. Shows lower activity with dCTP, weak activity with ATP and no activity with GTP, TTP, UTP, dATP, dGTP and dTTP. The chain is Choline-phosphate cytidylyltransferase from Streptococcus pneumoniae (strain ATCC BAA-255 / R6).